Consider the following 503-residue polypeptide: Glutamate/gamma-aminobutyrate antiporter (503 aa).

33-43 (LHLVFFLLLGG) is an L-glutamate binding site. The next 7 membrane-spanning stretches (helical) occupy residues 35 to 55 (LVFF…LCAA), 153 to 173 (FVVG…AYFI), 194 to 214 (VSTL…EASA), 232 to 252 (ILLV…VAAV), 366 to 386 (LTVV…FVLI), 407 to 427 (IIAG…FVPP), and 440 to 460 (MILL…YELH).

It belongs to the amino acid-polyamine-organocation (APC) superfamily. Glutamate:GABA antiporter (GGA) (TC 2.A.3.7) family.

It is found in the cell membrane. The catalysed reaction is 4-aminobutanoate(in) + L-glutamate(out) = 4-aminobutanoate(out) + L-glutamate(in). Its function is as follows. Involved in glutaminase-dependent acid resistance. Exchanges extracellular glutamate (Glu) for intracellular gamma-aminobutyric acid (GABA) under acidic conditions. The polypeptide is Glutamate/gamma-aminobutyrate antiporter (Lactococcus lactis subsp. cremoris (strain MG1363)).